The sequence spans 362 residues: NAD(P)H-quinone oxidoreductase subunit 1, chloroplastic (362 aa).

8 helical membrane passes run Ile29–Leu49, Ile103–Leu123, Ile128–Gly148, Ala164–Leu184, Phe202–Leu222, Tyr247–Ser267, Thr303–Ile323, and Phe342–Leu362.

It belongs to the complex I subunit 1 family. In terms of assembly, NDH is composed of at least 16 different subunits, 5 of which are encoded in the nucleus.

Its subcellular location is the plastid. It is found in the chloroplast thylakoid membrane. It catalyses the reaction a plastoquinone + NADH + (n+1) H(+)(in) = a plastoquinol + NAD(+) + n H(+)(out). It carries out the reaction a plastoquinone + NADPH + (n+1) H(+)(in) = a plastoquinol + NADP(+) + n H(+)(out). Functionally, NDH shuttles electrons from NAD(P)H:plastoquinone, via FMN and iron-sulfur (Fe-S) centers, to quinones in the photosynthetic chain and possibly in a chloroplast respiratory chain. The immediate electron acceptor for the enzyme in this species is believed to be plastoquinone. Couples the redox reaction to proton translocation, and thus conserves the redox energy in a proton gradient. The sequence is that of NAD(P)H-quinone oxidoreductase subunit 1, chloroplastic from Hordeum vulgare (Barley).